Here is a 145-residue protein sequence, read N- to C-terminus: D-aminoacyl-tRNA deacylase (145 aa).

The short motif at 137-138 (GP) is the Gly-cisPro motif, important for rejection of L-amino acids element.

This sequence belongs to the DTD family. Homodimer.

Its subcellular location is the cytoplasm. It carries out the reaction glycyl-tRNA(Ala) + H2O = tRNA(Ala) + glycine + H(+). The catalysed reaction is a D-aminoacyl-tRNA + H2O = a tRNA + a D-alpha-amino acid + H(+). Functionally, an aminoacyl-tRNA editing enzyme that deacylates mischarged D-aminoacyl-tRNAs. Also deacylates mischarged glycyl-tRNA(Ala), protecting cells against glycine mischarging by AlaRS. Acts via tRNA-based rather than protein-based catalysis; rejects L-amino acids rather than detecting D-amino acids in the active site. By recycling D-aminoacyl-tRNA to D-amino acids and free tRNA molecules, this enzyme counteracts the toxicity associated with the formation of D-aminoacyl-tRNA entities in vivo and helps enforce protein L-homochirality. The chain is D-aminoacyl-tRNA deacylase from Carboxydothermus hydrogenoformans (strain ATCC BAA-161 / DSM 6008 / Z-2901).